Reading from the N-terminus, the 293-residue chain is Ribosomal protein L11 methyltransferase (293 aa).

Thr145, Gly166, Asp188, and Asn230 together coordinate S-adenosyl-L-methionine.

It belongs to the methyltransferase superfamily. PrmA family.

Its subcellular location is the cytoplasm. The catalysed reaction is L-lysyl-[protein] + 3 S-adenosyl-L-methionine = N(6),N(6),N(6)-trimethyl-L-lysyl-[protein] + 3 S-adenosyl-L-homocysteine + 3 H(+). In terms of biological role, methylates ribosomal protein L11. This chain is Ribosomal protein L11 methyltransferase, found in Shewanella pealeana (strain ATCC 700345 / ANG-SQ1).